A 283-amino-acid chain; its full sequence is 2-dehydro-3-deoxyphosphooctonate aldolase (283 aa).

This sequence belongs to the KdsA family.

Its subcellular location is the cytoplasm. The catalysed reaction is D-arabinose 5-phosphate + phosphoenolpyruvate + H2O = 3-deoxy-alpha-D-manno-2-octulosonate-8-phosphate + phosphate. The protein operates within carbohydrate biosynthesis; 3-deoxy-D-manno-octulosonate biosynthesis; 3-deoxy-D-manno-octulosonate from D-ribulose 5-phosphate: step 2/3. Its pathway is bacterial outer membrane biogenesis; lipopolysaccharide biosynthesis. This is 2-dehydro-3-deoxyphosphooctonate aldolase from Parasynechococcus marenigrum (strain WH8102).